The sequence spans 78 residues: Large ribosomal subunit protein bL28 (78 aa).

It belongs to the bacterial ribosomal protein bL28 family.

The polypeptide is Large ribosomal subunit protein bL28 (Dichelobacter nodosus (strain VCS1703A)).